We begin with the raw amino-acid sequence, 239 residues long: Probable transcriptional regulatory protein BLi00754/BL02339 (239 aa).

Belongs to the TACO1 family. YeeN subfamily.

It localises to the cytoplasm. This Bacillus licheniformis (strain ATCC 14580 / DSM 13 / JCM 2505 / CCUG 7422 / NBRC 12200 / NCIMB 9375 / NCTC 10341 / NRRL NRS-1264 / Gibson 46) protein is Probable transcriptional regulatory protein BLi00754/BL02339.